The sequence spans 247 residues: CDP-diacylglycerol pyrophosphatase (247 aa).

The helical transmembrane segment at 5 to 22 (IVLALVVSVAVAGGWLWM) threads the bilayer.

The protein belongs to the Cdh family.

It localises to the cell inner membrane. It catalyses the reaction a CDP-1,2-diacyl-sn-glycerol + H2O = a 1,2-diacyl-sn-glycero-3-phosphate + CMP + 2 H(+). It participates in phospholipid metabolism; CDP-diacylglycerol degradation; phosphatidate from CDP-diacylglycerol: step 1/1. The sequence is that of CDP-diacylglycerol pyrophosphatase from Enterobacter sp. (strain 638).